We begin with the raw amino-acid sequence, 219 residues long: ATP-dependent Clp protease proteolytic subunit 1 (219 aa).

The active-site Nucleophile is the Ser-113. Residue His-138 is part of the active site.

This sequence belongs to the peptidase S14 family. As to quaternary structure, fourteen ClpP subunits assemble into 2 heptameric rings which stack back to back to give a disk-like structure with a central cavity, resembling the structure of eukaryotic proteasomes.

The protein resides in the cytoplasm. It catalyses the reaction Hydrolysis of proteins to small peptides in the presence of ATP and magnesium. alpha-casein is the usual test substrate. In the absence of ATP, only oligopeptides shorter than five residues are hydrolyzed (such as succinyl-Leu-Tyr-|-NHMec, and Leu-Tyr-Leu-|-Tyr-Trp, in which cleavage of the -Tyr-|-Leu- and -Tyr-|-Trp bonds also occurs).. Functionally, cleaves peptides in various proteins in a process that requires ATP hydrolysis. Has a chymotrypsin-like activity. Plays a major role in the degradation of misfolded proteins. Probably partially responsible for degradation of ECF sigma factor SigR prime. This Streptomyces coelicolor (strain ATCC BAA-471 / A3(2) / M145) protein is ATP-dependent Clp protease proteolytic subunit 1.